Reading from the N-terminus, the 85-residue chain is Small ribosomal subunit protein uS12m (85 aa).

Belongs to the universal ribosomal protein uS12 family.

The protein localises to the mitochondrion matrix. It localises to the kinetoplast. Protein S12 is involved in the translation initiation step. This Leishmania tarentolae (Sauroleishmania tarentolae) protein is Small ribosomal subunit protein uS12m (RPS12).